The sequence spans 894 residues: Translation initiation factor IF-2 (894 aa).

Positions 52-301 (DRGAAPNKLT…RRPSTLTQGF (250 aa)) are disordered. Positions 68–82 (STLNIPSTGGKSKSV) are enriched in polar residues. Over residues 107-154 (EQARREAEELAQHQVQRDAEEKAKRAAEDKAKREAAEQAKRVAAESDK) the composition is skewed to basic and acidic residues. The span at 155–168 (LTNQQTNTMTKSPQ) shows a compositional bias: polar residues. Composition is skewed to basic and acidic residues over residues 171–214 (EKAR…ERGG) and 237–254 (HAREAEDENDRKVEGDRR). Basic residues predominate over residues 255 to 269 (SRTRGGKATKQKKTS). Positions 270–283 (RLSESKADREEARA) are enriched in basic and acidic residues. A tr-type G domain is found at 393-562 (SRAPVVTIMG…LLQAEVLELK (170 aa)). The tract at residues 402-409 (GHVDHGKT) is G1. Position 402-409 (402-409 (GHVDHGKT)) interacts with GTP. A G2 region spans residues 427–431 (GITQH). Positions 448-451 (DTPG) are G3. GTP contacts are provided by residues 448–452 (DTPGH) and 502–505 (NKID). The tract at residues 502–505 (NKID) is G4. The segment at 538–540 (SAK) is G5.

It belongs to the TRAFAC class translation factor GTPase superfamily. Classic translation factor GTPase family. IF-2 subfamily.

The protein localises to the cytoplasm. Functionally, one of the essential components for the initiation of protein synthesis. Protects formylmethionyl-tRNA from spontaneous hydrolysis and promotes its binding to the 30S ribosomal subunits. Also involved in the hydrolysis of GTP during the formation of the 70S ribosomal complex. This Sodalis glossinidius (strain morsitans) protein is Translation initiation factor IF-2.